The primary structure comprises 540 residues: Flavin-dependent halogenase ptaM (540 aa).

An N-terminal signal peptide occupies residues 1–21 (MSVPAQTSVLIVGGGPAGSYA). Residues glycine 14, alanine 17, and glutamate 47 each contribute to the FAD site. 4 N-linked (GlcNAc...) asparagine glycosylation sites follow: asparagine 159, asparagine 192, asparagine 204, and asparagine 243. Chloride-binding residues include serine 330 and glycine 331. N-linked (GlcNAc...) asparagine glycans are attached at residues asparagine 480, asparagine 491, and asparagine 523.

Belongs to the flavin-dependent halogenase family.

Its pathway is secondary metabolite biosynthesis. Functionally, flavin-dependent halogenase; part of the gene cluster that mediates the biosynthesis of pestheic acid, a diphenyl ether which is a biosynthetic precursor of the unique chloropupukeananes. The biosynthesis initiates from condensation of acetate and malonate units catalyzed by the non-reducing PKS ptaA. As the ptaA protein is TE/CLC domain-deficient, hydrolysis and Claisen cyclization of the polyketide could be catalyzed by ptaB containing a beta-lactamase domain. The ptaB protein might hydrolyze the thioester bond between the ACP of ptaA and the intermediate to release atrochrysone carboxylic acid, which is spontaneously dehydrated to form endocrocin anthrone. Endocrocin anthrone is then converted to endocrocin, catalyzed by the anthrone oxygenase ptaC. Spontaneous decarboxylation of endocrocin occurs to generate emodin. An O-methyltransferase (ptaH or ptaI) could methylate emodin to form physcion. PtaJ could then catalyze the oxidative cleavage of physcion, and rotation of the intermediate could then afford desmethylisosulochrin. PtaF, a putative NADH-dependent oxidoreductase, might also participate in the oxidative cleavage step. Desmethylisosulochrin is then transformed by another O-methyltransferase (ptaH or ptaI) to form isosulochrin. Chlorination of isosulochrin by ptaM in the cyclohexadienone B ring then produces chloroisosulochrin. PtaE is responsible for the oxidative coupling reactions of both benzophenones isosulochrin and chloroisosulochrin to RES-1214-1 and pestheic acid respectively, regardless of chlorination. The sequence is that of Flavin-dependent halogenase ptaM from Pestalotiopsis fici (strain W106-1 / CGMCC3.15140).